The sequence spans 198 residues: CASP-like protein 2B1 (198 aa).

Topologically, residues 1–12 are cytoplasmic; the sequence is MAAAMGLERKAK. Residues 13 to 33 form a helical membrane-spanning segment; it reads VAEVALRCAVCALAALAAALV. The Extracellular portion of the chain corresponds to 34 to 55; it reads GTGSQTRTFFSLEKKARFTDMK. Residues 56–76 form a helical membrane-spanning segment; that stretch reads ALVLLVAAHGAAAVYSLLQLA. The Cytoplasmic segment spans residues 77–91; it reads RCAAAAAWKGGSNGG. A helical transmembrane segment spans residues 92 to 112; the sequence is AAVVAWSVFSCDQAVAYALMA. The Extracellular portion of the chain corresponds to 113 to 149; it reads ATAAALQSSVVGKRGQPELQWMPVCGLYGAFCRRVGE. A helical membrane pass occupies residues 150-170; sequence GLAAAVAAGLAAVLLAAVSAF. Over 171 to 198 the chain is Cytoplasmic; the sequence is NLFRLYGGGGGGRKSSAGAVSGNGANTW.

The protein belongs to the Casparian strip membrane proteins (CASP) family. In terms of assembly, homodimer and heterodimers.

It localises to the cell membrane. This Oryza sativa subsp. japonica (Rice) protein is CASP-like protein 2B1.